Reading from the N-terminus, the 233-residue chain is Homeobox protein ceh-30 (233 aa).

A compositionally biased stretch (polar residues) spans 50–85 (NNSTYSHDLDPSPQSVRSDLSTSPRASSPDRNSPMS). Disordered stretches follow at residues 50 to 93 (NNST…KART) and 206 to 233 (FQATSSSNSPSTHKSSESPQLDVSSNSD). The segment at residues 88–147 (SRKARTIFTDKQLQELENTFEKQKYLSVQDRMDLAHRMGLSDTQVKTWYQNRRTKWKRQA) is a DNA-binding region (homeobox). A compositionally biased stretch (polar residues) spans 224-233 (PQLDVSSNSD).

The protein localises to the nucleus. Functionally, cell-type specific anti-apoptotic transcription factor required for the sexually dimorphic survival of the male-specific CEM (cephalic male) sensory neurons during sex determination. In hermaphrodites, the homologous cells undergo programmed cell death due to transcriptional repression of ceh-30 by tra-1, the terminal regulator in the sex determination pathway. In Caenorhabditis briggsae, this protein is Homeobox protein ceh-30.